Here is a 154-residue protein sequence, read N- to C-terminus: MSTFVQKPAEVEKKWIIIDAEGLVVGRLATIVATRLRGKHKATFTPHVDDGDNVIVINAEKVAFTGKKYSDKKYYWHTGHPGGIKERTARQIIEGRFPERVVEKAIERMIPRGPLGRRQMKNLRVYAGSNHPHEAQQPTVLDVAALNKKNVRSA.

The protein belongs to the universal ribosomal protein uL13 family. Part of the 50S ribosomal subunit.

In terms of biological role, this protein is one of the early assembly proteins of the 50S ribosomal subunit, although it is not seen to bind rRNA by itself. It is important during the early stages of 50S assembly. The chain is Large ribosomal subunit protein uL13 from Agrobacterium fabrum (strain C58 / ATCC 33970) (Agrobacterium tumefaciens (strain C58)).